A 403-amino-acid chain; its full sequence is E2F transcription factor-like E2FE (403 aa).

A DNA-binding region spans residues 34–99 (RKQKSLGLLC…RAKNQYTWKG (66 aa)). The tract at residues 128–167 (VKGSDDEDDDEESSQPHSSSQTDSSKPGSLPQSSDPSKID) is disordered. The span at 142–152 (QPHSSSQTDSS) shows a compositional bias: low complexity. Polar residues predominate over residues 153-163 (KPGSLPQSSDP). A DNA-binding region spans residues 169–250 (RREKSLGLLT…SRKPAFKWLG (82 aa)). A disordered region spans residues 282–319 (VKRSKSSSSSQENATERRLKMKKHSTPESSYNKSFDVH).

It belongs to the E2F/DP family. In terms of tissue distribution, expressed exclusively in mitotically dividing cells. Highly expressed in young leaves and mature flowers. Lower expression in young stalk and in young and mature flowers.

Its subcellular location is the nucleus. Its function is as follows. Inhibitor of E2F-dependent activation of gene expression. Binds specifically the E2 recognition site without interacting with DP proteins and prevents transcription activation by E2F/DP heterodimers. Controls the timing of endocycle onset and inhibits endoreduplication. The chain is E2F transcription factor-like E2FE (E2FE) from Arabidopsis thaliana (Mouse-ear cress).